The primary structure comprises 396 residues: Phosphoglycerate kinase (396 aa).

Residues 21–23 (DFN), arginine 37, 60–63 (HLGR), arginine 121, and arginine 154 contribute to the substrate site. ATP-binding positions include lysine 205, glycine 296, glutamate 327, and 353-356 (GGDS).

The protein belongs to the phosphoglycerate kinase family. In terms of assembly, monomer.

The protein localises to the cytoplasm. It catalyses the reaction (2R)-3-phosphoglycerate + ATP = (2R)-3-phospho-glyceroyl phosphate + ADP. It participates in carbohydrate degradation; glycolysis; pyruvate from D-glyceraldehyde 3-phosphate: step 2/5. In Anaeromyxobacter sp. (strain Fw109-5), this protein is Phosphoglycerate kinase.